The sequence spans 157 residues: Universal stress protein Sll1654 (157 aa).

Belongs to the universal stress protein A family.

The sequence is that of Universal stress protein Sll1654 from Synechocystis sp. (strain ATCC 27184 / PCC 6803 / Kazusa).